The primary structure comprises 692 residues: Elongation factor G (692 aa).

The tr-type G domain maps to 8–283 (NRIRNIGIAA…AVIDYLPAPT (276 aa)). GTP-binding positions include 17 to 24 (AHIDAGKT), 81 to 85 (DTPGH), and 135 to 138 (NKMD).

The protein belongs to the TRAFAC class translation factor GTPase superfamily. Classic translation factor GTPase family. EF-G/EF-2 subfamily.

It is found in the cytoplasm. Functionally, catalyzes the GTP-dependent ribosomal translocation step during translation elongation. During this step, the ribosome changes from the pre-translocational (PRE) to the post-translocational (POST) state as the newly formed A-site-bound peptidyl-tRNA and P-site-bound deacylated tRNA move to the P and E sites, respectively. Catalyzes the coordinated movement of the two tRNA molecules, the mRNA and conformational changes in the ribosome. This is Elongation factor G from Helicobacter pylori (strain G27).